The primary structure comprises 181 residues: SecB-like chaperone MT2006 (181 aa).

Belongs to the SecB-like family. Homotetramer, interacts with antitoxin HigA1.

Its function is as follows. Chaperone component of an atypical, type II toxin-antitoxin chaperone (TAC) module, probably required for antitoxin HigA1 to neutralize its cognate toxin HigB1. The protein is SecB-like chaperone MT2006 (secBL) of Mycobacterium tuberculosis (strain CDC 1551 / Oshkosh).